The following is a 172-amino-acid chain: MSEENNSQNSNPPNPENGEIASEIQKLQEQAEKFKNDYLYLRAEFENYKRNAIKERSELMKYGGERLVRDLLEVVDNFDRALSVNVSAENFNTFKQGVDMTAQELKSLLQRHNVIEIPAHGAPFDPSVHEALSSEATDQMAPGHIVRVFKKPYKLHDKVIRPGQVVVAKKPE.

Positions 1–11 (MSEENNSQNSN) are enriched in low complexity. Residues 1-22 (MSEENNSQNSNPPNPENGEIAS) form a disordered region.

It belongs to the GrpE family. In terms of assembly, homodimer.

The protein resides in the cytoplasm. In terms of biological role, participates actively in the response to hyperosmotic and heat shock by preventing the aggregation of stress-denatured proteins, in association with DnaK and GrpE. It is the nucleotide exchange factor for DnaK and may function as a thermosensor. Unfolded proteins bind initially to DnaJ; upon interaction with the DnaJ-bound protein, DnaK hydrolyzes its bound ATP, resulting in the formation of a stable complex. GrpE releases ADP from DnaK; ATP binding to DnaK triggers the release of the substrate protein, thus completing the reaction cycle. Several rounds of ATP-dependent interactions between DnaJ, DnaK and GrpE are required for fully efficient folding. The protein is Protein GrpE of Bdellovibrio bacteriovorus (strain ATCC 15356 / DSM 50701 / NCIMB 9529 / HD100).